The chain runs to 98 residues: Tan_12Cys (98 aa).

Positions 1-21 are cleaved as a signal peptide; it reads MNLKVLFLLAMVLVTLCLGED. The propeptide occupies 22-28; the sequence is RVTDRRK.

The protein belongs to the teretoxin C (TC) superfamily. In terms of processing, contains 6 disulfide bonds. In terms of tissue distribution, expressed by the venom duct.

The protein resides in the secreted. The polypeptide is Tan_12Cys (Terebra anilis (Auger snail)).